We begin with the raw amino-acid sequence, 716 residues long: Fatty acid oxidation complex subunit alpha (716 aa).

The interval 1–189 (MIYQSPTIQV…KVGAIDAVVA (189 aa)) is enoyl-CoA hydratase/isomerase. Substrate is bound at residue aspartate 296. Residues 311-716 (KDVNQAAVLG…AANNGSYYQA (406 aa)) form a 3-hydroxyacyl-CoA dehydrogenase region. Residues methionine 324, aspartate 343, 400 to 402 (VVE), lysine 407, and serine 429 each bind NAD(+). The For 3-hydroxyacyl-CoA dehydrogenase activity role is filled by histidine 450. Asparagine 453 contacts NAD(+). 2 residues coordinate substrate: asparagine 500 and tyrosine 660.

It in the N-terminal section; belongs to the enoyl-CoA hydratase/isomerase family. The protein in the C-terminal section; belongs to the 3-hydroxyacyl-CoA dehydrogenase family. Heterotetramer of two alpha chains (FadB) and two beta chains (FadA).

It carries out the reaction a (3S)-3-hydroxyacyl-CoA + NAD(+) = a 3-oxoacyl-CoA + NADH + H(+). It catalyses the reaction a (3S)-3-hydroxyacyl-CoA = a (2E)-enoyl-CoA + H2O. The enzyme catalyses a 4-saturated-(3S)-3-hydroxyacyl-CoA = a (3E)-enoyl-CoA + H2O. The catalysed reaction is (3S)-3-hydroxybutanoyl-CoA = (3R)-3-hydroxybutanoyl-CoA. It carries out the reaction a (3Z)-enoyl-CoA = a 4-saturated (2E)-enoyl-CoA. It catalyses the reaction a (3E)-enoyl-CoA = a 4-saturated (2E)-enoyl-CoA. Its pathway is lipid metabolism; fatty acid beta-oxidation. Its function is as follows. Involved in the aerobic and anaerobic degradation of long-chain fatty acids via beta-oxidation cycle. Catalyzes the formation of 3-oxoacyl-CoA from enoyl-CoA via L-3-hydroxyacyl-CoA. It can also use D-3-hydroxyacyl-CoA and cis-3-enoyl-CoA as substrate. The protein is Fatty acid oxidation complex subunit alpha of Shewanella frigidimarina (strain NCIMB 400).